Consider the following 159-residue polypeptide: Transcription elongation factor GreA (159 aa).

Belongs to the GreA/GreB family.

Necessary for efficient RNA polymerase transcription elongation past template-encoded arresting sites. The arresting sites in DNA have the property of trapping a certain fraction of elongating RNA polymerases that pass through, resulting in locked ternary complexes. Cleavage of the nascent transcript by cleavage factors such as GreA or GreB allows the resumption of elongation from the new 3'terminus. GreA releases sequences of 2 to 3 nucleotides. The chain is Transcription elongation factor GreA from Mycoplasmoides gallisepticum (strain R(low / passage 15 / clone 2)) (Mycoplasma gallisepticum).